Consider the following 180-residue polypeptide: MGNFHATTIFAVHHNGECAMAGDGQVTMGNAVVMKHTARKVRKLFQGKVLAGFAGSVADAFTLFEMFEGKLEEYNGNLQRAAVEMAKQWRGDKMLRQLEAMLIVMDKTTMLLVSGTGEVIEPDDGILAIGSGGNYALSAGRALKQYASEHLTAKQIAKASLEIAGDICVYTNHNIIVEEL.

Threonine 7 is an active-site residue. The Na(+) site is built by glycine 165, cysteine 168, and threonine 171.

The protein belongs to the peptidase T1B family. HslV subfamily. As to quaternary structure, a double ring-shaped homohexamer of HslV is capped on each side by a ring-shaped HslU homohexamer. The assembly of the HslU/HslV complex is dependent on binding of ATP.

Its subcellular location is the cytoplasm. It catalyses the reaction ATP-dependent cleavage of peptide bonds with broad specificity.. Allosterically activated by HslU binding. Protease subunit of a proteasome-like degradation complex believed to be a general protein degrading machinery. The protein is ATP-dependent protease subunit HslV of Bacillus anthracis (strain A0248).